The primary structure comprises 327 residues: Peroxidase 21 (327 aa).

The first 28 residues, 1–28 (MANAKPFCLLGFFCLLLQLFSIFHIGNG), serve as a signal peptide directing secretion. 4 cysteine pairs are disulfide-bonded: Cys39–Cys118, Cys72–Cys77, Cys124–Cys323, and Cys204–Cys231. The active-site Proton acceptor is His70. Asp71, Val74, Asp78, and Ser80 together coordinate Ca(2+). Substrate is bound at residue Pro167. N-linked (GlcNAc...) asparagine glycosylation is present at Asn170. His197 is a binding site for heme b. A Ca(2+)-binding site is contributed by Ser198. The Ca(2+) site is built by Asp247, Thr250, and Asp255.

This sequence belongs to the peroxidase family. Classical plant (class III) peroxidase subfamily. Requires heme b as cofactor. It depends on Ca(2+) as a cofactor. Preferentially expressed in roots and leaves, slightly in stems.

The enzyme catalyses 2 a phenolic donor + H2O2 = 2 a phenolic radical donor + 2 H2O. Removal of H(2)O(2), oxidation of toxic reductants, biosynthesis and degradation of lignin, suberization, auxin catabolism, response to environmental stresses such as wounding, pathogen attack and oxidative stress. These functions might be dependent on each isozyme/isoform in each plant tissue. In terms of biological role, might function as heat shock-like defense protein. May be implicated in the systemic acquired resistance response. This chain is Peroxidase 21 (PER21), found in Arabidopsis thaliana (Mouse-ear cress).